Here is a 227-residue protein sequence, read N- to C-terminus: UPF0173 metal-dependent hydrolase BC_4613 (227 aa).

It belongs to the UPF0173 family.

In Bacillus cereus (strain ATCC 14579 / DSM 31 / CCUG 7414 / JCM 2152 / NBRC 15305 / NCIMB 9373 / NCTC 2599 / NRRL B-3711), this protein is UPF0173 metal-dependent hydrolase BC_4613.